The following is a 147-amino-acid chain: MASHRLLLLCLAGLVFVSEAGPTGVDESKCPLMVKVLDAVRGSPAVNVAVNVFKKAADETWAPFASGKTSESGELHGLTTEEEFVEGIYKVEIDTKSYWKSLGISPFHEHAEVVFTANDSGPRHYTIAALLSPYSYSTTAVVTNPKE.

An N-terminal signal peptide occupies residues 1–20 (MASHRLLLLCLAGLVFVSEA). A Sulfocysteine modification is found at C30. K35 contacts L-thyroxine. S72 carries the post-translational modification Phosphoserine. E74 is a binding site for L-thyroxine. A glycan (N-linked (GlcNAc...) asparagine) is linked at N118. Residue S137 participates in L-thyroxine binding.

Belongs to the transthyretin family. As to quaternary structure, homotetramer. Dimer of dimers. In the homotetramer, subunits assemble around a central channel that can accommodate two ligand molecules. Interacts with RBP4. In terms of processing, sulfonation of the reactive cysteine Cys-30 enhances the stability of the native conformation of TTR, avoiding misassembly of the protein leading to amyloid formation.

Its subcellular location is the secreted. Thyroid hormone-binding protein. Probably transports thyroxine from the bloodstream to the brain. This chain is Transthyretin (TTR), found in Macaca fascicularis (Crab-eating macaque).